The primary structure comprises 178 residues: Large ribosomal subunit protein uL10 (178 aa).

This sequence belongs to the universal ribosomal protein uL10 family. Part of the ribosomal stalk of the 50S ribosomal subunit. The N-terminus interacts with L11 and the large rRNA to form the base of the stalk. The C-terminus forms an elongated spine to which L12 dimers bind in a sequential fashion forming a multimeric L10(L12)X complex.

Its function is as follows. Forms part of the ribosomal stalk, playing a central role in the interaction of the ribosome with GTP-bound translation factors. The sequence is that of Large ribosomal subunit protein uL10 from Thermosynechococcus vestitus (strain NIES-2133 / IAM M-273 / BP-1).